A 382-amino-acid polypeptide reads, in one-letter code: UDP-4-amino-4-deoxy-L-arabinose--oxoglutarate aminotransferase (382 aa).

Position 183 is an N6-(pyridoxal phosphate)lysine (Lys183).

The protein belongs to the DegT/DnrJ/EryC1 family. ArnB subfamily. As to quaternary structure, homodimer. The cofactor is pyridoxal 5'-phosphate.

It carries out the reaction UDP-4-amino-4-deoxy-beta-L-arabinose + 2-oxoglutarate = UDP-beta-L-threo-pentopyranos-4-ulose + L-glutamate. It participates in nucleotide-sugar biosynthesis; UDP-4-deoxy-4-formamido-beta-L-arabinose biosynthesis; UDP-4-deoxy-4-formamido-beta-L-arabinose from UDP-alpha-D-glucuronate: step 2/3. The protein operates within bacterial outer membrane biogenesis; lipopolysaccharide biosynthesis. Functionally, catalyzes the conversion of UDP-4-keto-arabinose (UDP-Ara4O) to UDP-4-amino-4-deoxy-L-arabinose (UDP-L-Ara4N). The modified arabinose is attached to lipid A and is required for resistance to polymyxin and cationic antimicrobial peptides. The sequence is that of UDP-4-amino-4-deoxy-L-arabinose--oxoglutarate aminotransferase from Pseudomonas aeruginosa (strain UCBPP-PA14).